The following is a 523-amino-acid chain: GMP synthase [glutamine-hydrolyzing] (523 aa).

Positions 8–205 (KILILDFGSQ…VVGICGCECK (198 aa)) constitute a Glutamine amidotransferase type-1 domain. The Nucleophile role is filled by C85. Active-site residues include H179 and E181. Residues 206 to 398 (WTAENIIEDA…LGLPAEMLNR (193 aa)) enclose the GMPS ATP-PPase domain. An ATP-binding site is contributed by 233 to 239 (SGGVDSS).

In terms of assembly, homodimer.

It catalyses the reaction XMP + L-glutamine + ATP + H2O = GMP + L-glutamate + AMP + diphosphate + 2 H(+). The protein operates within purine metabolism; GMP biosynthesis; GMP from XMP (L-Gln route): step 1/1. In terms of biological role, catalyzes the synthesis of GMP from XMP. The polypeptide is GMP synthase [glutamine-hydrolyzing] (Actinobacillus pleuropneumoniae serotype 3 (strain JL03)).